Here is a 161-residue protein sequence, read N- to C-terminus: tRNA-acetylating toxin 1 (161 aa).

The acetyl-CoA site is built by Leu92, Val94, His99, Gly100, Gly102, Gly104, Ala105, Leu132, and Glu135. Tyr140 is an active-site residue. Residue His142 participates in acetyl-CoA binding.

It belongs to the acetyltransferase family. GNAT subfamily. As to quaternary structure, homodimer (in absence of antitoxin). Forms a complex with cognate antitoxin TacA1. Forms a 4:2 antitoxin:toxin complex with cognate antitoxin TacA1.

The enzyme catalyses glycyl-tRNA(Gly) + acetyl-CoA = N-acetylglycyl-tRNA(Gly) + CoA + H(+). In terms of biological role, toxic component of a type II toxin-antitoxin (TA) system. Acetylates tRNA and inhibits translation, does not acetylate uncharged tRNA. Upon expression in situ acetylates only Gly-tRNA(Gly). In vitro acetylates mainly Gly and Ile/Leu. Upon induction of the toxin gene in lag phase in rich medium (but not mid-exponential phase) the lag phase is extended by several hours, locking bacteria in a non-growth state. Neutralized only by cognate antitoxin TacA1 (A8), but not by TacA2 or TacA3. Its toxic effect is neutralized by expression of peptidyl-tRNA hydrolase (pth) in lag phase. NAD-dependent protein deacylase (cobB) also play a role in detoxifying TacT targets. Expression increases persister cell formation, which is also abolished by either cognate antitoxin or Pth expression. Plays a role in persister cell formation. Its function is as follows. The TacA1-TacT1 complex binds (and probably represses) its own promoter DNA but not that of tacA3-tacT3, it does not repress the tacA3-tacT3 promoter. This is tRNA-acetylating toxin 1 from Salmonella typhimurium (strain 14028s / SGSC 2262).